The sequence spans 887 residues: Pre-mRNA-splicing factor cwf22 (887 aa).

The tract at residues 1–27 (MEKEDKSFGIGMLDYNRENPESSGHSR) is disordered. In terms of domain architecture, MIF4G spans 124–307 (KKSINGLINK…EVLFQTRKDK (184 aa)). Residues 366–401 (ILGEEDDDENEEDEEDSEETSESEEDESVNDEKPQV) are disordered. Over residues 368–394 (GEEDDDENEEDEEDSEETSESEEDESV) the composition is skewed to acidic residues. The region spanning 411–527 (NLRKSIYLTI…GWEVYDCVRL (117 aa)) is the MI domain. 2 disordered regions span residues 607 to 834 (MPKS…KTYH) and 867 to 887 (GELY…PRAD). Low complexity predominate over residues 618-662 (EGYSSGSETGSTYSSSYSSTYSRGRSYSRSTRSYSKSRSYSRSRS). At Ser662 the chain carries Phosphoserine. Phosphothreonine is present on Thr664. The span at 677 to 690 (KDRELSPRGRERSS) shows a compositional bias: basic and acidic residues. The span at 691–712 (NRNSYSDLSRSSSLSRGRSRSY) shows a compositional bias: low complexity. The segment covering 717 to 726 (RLIESEDKGY) has biased composition (basic and acidic residues). Positions 736–746 (RKYRSRQRYRR) are enriched in basic residues. Low complexity-rich tracts occupy residues 747–762 (SYAG…SRSP) and 769–791 (SMSC…SRSP). Positions 799–809 (DSLSYNRQYSP) are enriched in polar residues.

It belongs to the CWC22 family. In terms of assembly, belongs to the 40S cdc5-associated complex (or cwf complex), a spliceosome sub-complex reminiscent of a late-stage spliceosome composed of the U2, U5 and U6 snRNAs and at least brr2, cdc5, cwf2/prp3, cwf3/syf1, cwf4/syf3, cwf5/ecm2, spp42/cwf6, cwf7/spf27, cwf8, cwf9, cwf10, cwf11, cwf12, prp45/cwf13, cwf14, cwf15, cwf16, cwf17, cwf18, cwf19, cwf20, cwf21, cwf22, cwf23, cwf24, cwf25, cwf26, cyp7/cwf27, cwf28, cwf29/ist3, lea1, msl1, prp5/cwf1, prp10, prp12/sap130, prp17, prp22, sap61, sap62, sap114, sap145, slu7, smb1, smd1, smd3, smf1, smg1 and syf2.

It localises to the cytoplasm. Its subcellular location is the nucleus. Its function is as follows. May be involved in pre-mRNA splicing. In Schizosaccharomyces pombe (strain 972 / ATCC 24843) (Fission yeast), this protein is Pre-mRNA-splicing factor cwf22 (cwf22).